The sequence spans 62 residues: Potassium channel toxin kappa-KTx 3.3 (62 aa).

Residues 1-26 (MKSTLMTASLLILVLLSIVDYASVYA) form the signal peptide. Residues 27 to 36 (ELIDSEISME) constitute a propeptide that is removed on maturation. Disulfide bonds link Cys-43–Cys-61 and Cys-47–Cys-57.

It belongs to the short scorpion toxin superfamily. Potassium channel inhibitor kappa-KTx family. Kappa-KTx 3 subfamily. In terms of tissue distribution, expressed by the venom gland.

The protein resides in the secreted. Functionally, potassium channel inhibitor (Kv). The sequence is that of Potassium channel toxin kappa-KTx 3.3 from Heterometrus petersii (Asian forest scorpion).